Reading from the N-terminus, the 137-residue chain is DNA-binding protein H-NS (137 aa).

Residues 13 to 65 (TLRAQARECTLETLEEMLEKLEVVVNERREEESAAAAEVEERTRKLQQYREML) adopt a coiled-coil conformation. The DNA-binding element occupies 112 to 117 (QGRTPA).

This sequence belongs to the histone-like protein H-NS family. In terms of assembly, homodimer that oligomerizes on DNA into higher-order complexes that form bridges between disparate regions of DNA compacting it. Interacts with Hha, YdgT and StpA.

The protein localises to the cytoplasm. The protein resides in the nucleoid. Functionally, a DNA-binding protein implicated in transcriptional repression and chromosome organization and compaction. Binds AT-rich DNA, repressing its transcription; about 754/4438 tested genes (15%) bind to H-NS, 70% of these are AT-rich and correspond to horizontally transferred geness (HTG), thus playing a central role in silencing foreign genes. This offers the selective advantage of silencing foreign DNA. Binds nucleation sites in AT-rich DNA and bridges them, forming higher-order nucleoprotein complexes and condensing the chromosome. A subset of genes are repressed by H-NS in association with Hha and/or YdgT. This Salmonella typhimurium (strain 14028s / SGSC 2262) protein is DNA-binding protein H-NS (hns).